The chain runs to 431 residues: Glucose-1-phosphate adenylyltransferase (431 aa).

Residues Gly163, 178-179, and Ser210 contribute to the alpha-D-glucose 1-phosphate site; that span reads EK.

This sequence belongs to the bacterial/plant glucose-1-phosphate adenylyltransferase family. Homotetramer.

The enzyme catalyses alpha-D-glucose 1-phosphate + ATP + H(+) = ADP-alpha-D-glucose + diphosphate. The protein operates within glycan biosynthesis; glycogen biosynthesis. In terms of biological role, involved in the biosynthesis of ADP-glucose, a building block required for the elongation reactions to produce glycogen. Catalyzes the reaction between ATP and alpha-D-glucose 1-phosphate (G1P) to produce pyrophosphate and ADP-Glc. The sequence is that of Glucose-1-phosphate adenylyltransferase from Synechococcus sp. (strain WH7803).